A 516-amino-acid chain; its full sequence is UDP-N-acetylmuramyl-tripeptide synthetase (516 aa).

Serine 38 contributes to the UDP-N-acetyl-alpha-D-muramoyl-L-alanyl-D-glutamate binding site. An ATP-binding site is contributed by 116 to 122 (GTKGKTT). UDP-N-acetyl-alpha-D-muramoyl-L-alanyl-D-glutamate contacts are provided by residues 162–163 (TT), serine 189, and arginine 197. Lysine 231 bears the N6-carboxylysine mark.

The protein belongs to the MurCDEF family. MurE subfamily. In terms of processing, carboxylation is probably crucial for Mg(2+) binding and, consequently, for the gamma-phosphate positioning of ATP.

The protein resides in the cytoplasm. It functions in the pathway cell wall biogenesis; peptidoglycan biosynthesis. In terms of biological role, catalyzes the addition of an amino acid to the nucleotide precursor UDP-N-acetylmuramoyl-L-alanyl-D-glutamate (UMAG) in the biosynthesis of bacterial cell-wall peptidoglycan. The sequence is that of UDP-N-acetylmuramyl-tripeptide synthetase from Lactobacillus delbrueckii subsp. bulgaricus (strain ATCC 11842 / DSM 20081 / BCRC 10696 / JCM 1002 / NBRC 13953 / NCIMB 11778 / NCTC 12712 / WDCM 00102 / Lb 14).